The chain runs to 36 residues: Photosystem I reaction center subunit VIII (36 aa).

Residues 8-28 (SIFVPLVGLVFPAIAMASLFL) traverse the membrane as a helical segment.

Belongs to the PsaI family.

The protein localises to the plastid. It is found in the chloroplast thylakoid membrane. In terms of biological role, may help in the organization of the PsaL subunit. In Solanum bulbocastanum (Wild potato), this protein is Photosystem I reaction center subunit VIII.